The primary structure comprises 162 residues: MATAEIEEIPALLKPGQTVAGLDLGTKTIGLAVSDLGLSFAHPRPVIKRVKFTIDAQVLLKALETDKVGVIMIGLPMNMDGTAGPRVQATRAFVRTMQPLTDLPFVFWDERLSTVAAERALIGMDVSRGKRADRIDSAAAAFILQGALDRLHMMRRNDYDAG.

It belongs to the YqgF nuclease family.

The protein localises to the cytoplasm. Functionally, could be a nuclease involved in processing of the 5'-end of pre-16S rRNA. The sequence is that of Putative pre-16S rRNA nuclease from Brucella abortus (strain S19).